The chain runs to 222 residues: Sortase A (222 aa).

At 1-7 the chain is on the cytoplasmic side; it reads MLKKTIA. A helical membrane pass occupies residues 8–28; that stretch reads IIILIIGLLLIFSPFIKNGIV. Topologically, residues 29–222 are extracellular; that stretch reads KYMSGHETIE…ELENKYFPSK (194 aa). The active-site Proton donor/acceptor is His127. Cys188 serves as the catalytic Acyl-thioester intermediate.

It belongs to the bacterial sortase family. Class A subfamily.

It is found in the cell membrane. Its activity is regulated as follows. Activity is enhanced by Zn(2+) and strongly enhanced by Ca(2+). Inhibited by chalcone, a precursor of several flavonoids, which blocks the SrtA active site. Transpeptidase that anchors surface proteins to the cell wall. Recognizes and modifies its substrate by proteolytic cleavage of a C-terminal sorting signal. Following cleavage, a covalent intermediate is formed via a thioester bond between the sortase and its substrate, which is then transferred and covalently attached to the cell wall. This sortase recognizes a Leu-Pro-x-Thr-Gly (LPXTG) motif, which is cleaved by the sortase between the threonine and glycine residues. Involved in pathogenesis. May regulate the rate of synthesis and/or the stability of a subset of LPXTG proteins. Not involved in cell wall-anchoring of Hbp2 (SvpA) or Hbp1. The chain is Sortase A from Listeria monocytogenes serovar 1/2a (strain ATCC BAA-679 / EGD-e).